The chain runs to 571 residues: Potassium-transporting ATPase potassium-binding subunit (571 aa).

12 helical membrane-spanning segments follow: residues 5 to 25, 64 to 84, 136 to 156, 179 to 199, 220 to 240, 254 to 274, 285 to 305, 330 to 350, 375 to 395, 421 to 441, 488 to 508, and 527 to 547; these read GWMQ…PLGG, LAYA…LYAL, GLTH…VALI, LYVL…QGMP, VGPV…GGFF, LSNF…TNVF, WAIL…TYWA, FGIA…CGAV, IIGG…VAIF, MLGI…ATVV, LAIG…AIAG, and GGLF…LTFF.

This sequence belongs to the KdpA family. As to quaternary structure, the system is composed of three essential subunits: KdpA, KdpB and KdpC.

The protein resides in the cell inner membrane. Functionally, part of the high-affinity ATP-driven potassium transport (or Kdp) system, which catalyzes the hydrolysis of ATP coupled with the electrogenic transport of potassium into the cytoplasm. This subunit binds the periplasmic potassium ions and delivers the ions to the membrane domain of KdpB through an intramembrane tunnel. The chain is Potassium-transporting ATPase potassium-binding subunit from Methylorubrum extorquens (strain CM4 / NCIMB 13688) (Methylobacterium extorquens).